The primary structure comprises 314 residues: Oxaloacetate tautomerase FAHD2B, mitochondrial (314 aa).

A mitochondrion-targeting transit peptide spans 1–84; the sequence is MLVSGRRRLL…ATLSVARRAL (84 aa). Residues Glu159, Glu161, and Asp190 each contribute to the Mg(2+) site.

This sequence belongs to the FAH family. Mg(2+) serves as cofactor. The cofactor is Mn(2+).

The protein localises to the mitochondrion. The enzyme catalyses oxaloacetate = enol-oxaloacetate. In terms of biological role, tautomerase that converts enol-oxaloacetate, a strong inhibitor of succinate dehydrogenase, to the physiological keto form of oxaloacetate. It is thereby required to maximize aerobic respiration efficiency by preventing succinate dehydrogenase inhibition. In Homo sapiens (Human), this protein is Oxaloacetate tautomerase FAHD2B, mitochondrial.